The following is a 488-amino-acid chain: Fumarate hydratase, mitochondrial (488 aa).

Residues 1–24 (MLRFTNCSCKTFVKSSYKLNIRRM) constitute a mitochondrion transit peptide. Substrate-binding positions include 124-126 (SGT), 154-157 (HPNN), 164-166 (SSN), and threonine 212. Histidine 213 (proton donor/acceptor) is an active-site residue. Serine 343 is an active-site residue. Substrate contacts are provided by residues serine 344 and 349-351 (KVN). A Phosphothreonine modification is found at threonine 428.

The protein belongs to the class-II fumarase/aspartase family. Fumarase subfamily. In terms of assembly, homotetramer.

Its subcellular location is the mitochondrion matrix. It is found in the cytoplasm. The protein localises to the nucleus. The enzyme catalyses (S)-malate = fumarate + H2O. It participates in carbohydrate metabolism; tricarboxylic acid cycle; (S)-malate from fumarate: step 1/1. Functionally, catalyzes the reversible stereospecific interconversion of fumarate to L-malate. In mitochondrion, catalyzes the hydration of fumarate to L-malate in the tricarboxylic acid (TCA) cycle to facilitate a transition step in the production of energy in the form of NADH. In cytoplasm and nucleus, involved in DNA repair in response to DNA damage: following DNA double-strand breaks (DSBs), translocates from the cytosol to the nucleus and promotes DNA repair by catalyzing the dehydration of L-malate to fumarate. This chain is Fumarate hydratase, mitochondrial, found in Saccharomyces cerevisiae (strain ATCC 204508 / S288c) (Baker's yeast).